A 190-amino-acid chain; its full sequence is Potassium-transporting ATPase KdpC subunit (190 aa).

A helical membrane pass occupies residues Thr-10–Gly-30.

Belongs to the KdpC family. The system is composed of three essential subunits: KdpA, KdpB and KdpC.

The protein resides in the cell inner membrane. Functionally, part of the high-affinity ATP-driven potassium transport (or Kdp) system, which catalyzes the hydrolysis of ATP coupled with the electrogenic transport of potassium into the cytoplasm. This subunit acts as a catalytic chaperone that increases the ATP-binding affinity of the ATP-hydrolyzing subunit KdpB by the formation of a transient KdpB/KdpC/ATP ternary complex. This Escherichia coli (strain SMS-3-5 / SECEC) protein is Potassium-transporting ATPase KdpC subunit.